Here is a 251-residue protein sequence, read N- to C-terminus: tRNA (guanine-N(1)-)-methyltransferase (251 aa).

Residues Gly117 and 137–142 (IGDYVL) each bind S-adenosyl-L-methionine.

The protein belongs to the RNA methyltransferase TrmD family. Homodimer.

The protein localises to the cytoplasm. It catalyses the reaction guanosine(37) in tRNA + S-adenosyl-L-methionine = N(1)-methylguanosine(37) in tRNA + S-adenosyl-L-homocysteine + H(+). Functionally, specifically methylates guanosine-37 in various tRNAs. The sequence is that of tRNA (guanine-N(1)-)-methyltransferase from Actinobacillus pleuropneumoniae serotype 5b (strain L20).